A 208-amino-acid polypeptide reads, in one-letter code: Cytochrome c oxidase assembly protein CtaG (208 aa).

Over 1-19 the chain is Cytoplasmic; it reads MPDTQPNVSPNPIRRRGLG. A helical; Signal-anchor for type II membrane protein membrane pass occupies residues 20–42; it reads RDATVASICGLVVALMVGASFAA. At 43-208 the chain is on the periplasmic side; it reads VPFYNWFCRT…TAPDKRKGNL (166 aa).

Belongs to the COX11/CtaG family.

The protein localises to the cell inner membrane. In terms of biological role, exerts its effect at some terminal stage of cytochrome c oxidase synthesis, probably by being involved in the insertion of the copper B into subunit I. This is Cytochrome c oxidase assembly protein CtaG from Rhodopseudomonas palustris (strain HaA2).